A 526-amino-acid chain; its full sequence is Acid-sensing ion channel 1 (526 aa).

Over 1–49 (MELKTEEEEVGGVQPVSIQAFASSSTLHGLAHIFSYERLSLKRALWALC) the chain is Cytoplasmic. The chain crosses the membrane as a helical span at residues 50–66 (FLGSLAVLLCVCTERVQ). Residues 67–425 (YYFCYHHVTK…ETIEQKKAYE (359 aa)) lie on the Extracellular side of the membrane. 7 disulfides stabilise this stretch: Cys93/Cys194, Cys172/Cys179, Cys290/Cys365, Cys308/Cys361, Cys312/Cys359, Cys321/Cys343, and Cys323/Cys335. Residues Asn366 and Asn393 are each glycosylated (N-linked (GlcNAc...) asparagine). Residues 426 to 456 (IAGLLGDIGGQMGLFIGASILTVLELFDYAY) form a discontinuously helical membrane-spanning segment. A GAS motif; ion selectivity filter motif is present at residues 442–444 (GAS). Residues 457 to 526 (EVIKHRLCRR…ARGTFEDFTC (70 aa)) are Cytoplasmic-facing. Residue Ser477 is modified to Phosphoserine; by PKA. At Ser497 the chain carries Phosphoserine.

This sequence belongs to the amiloride-sensitive sodium channel (TC 1.A.6) family. ASIC1 subfamily. Homotrimer. Heterotrimer; with other ASIC proteins producing channel with different properties. Interacts with PICK1; regulates ASIC1 clustering in membranes. Interacts with STOM; alters heterotrimeric ASIC channels activity. In terms of processing, pH-gating could be regulated by serine proteases. Post-translationally, phosphorylation by PKA regulates interaction with PICK1 and subcellular localization. Phosphorylation by PKC may regulate the channel. As to expression, expressed in brain areas receiving strong excitatory corticofugal input. In hippocampus, expressed in the hilus of the dentate gyrus. In the cerebral cortex expressed in anterior and posterior cingulate cortex, sensory and motor cortices. In the sensory cortex strongest expression is detected in the whisker barrel field. In sensorimotor and cingulate cortex expression is elevated in layer III. Also expressed in basal ganglia, striatum, ventral pallidum, olfactory tubercle, and nucleus accumbens. Weakly expressed in thalamus with the exception of the habenula and the medial septal nuclei. In olfactory bulb, preferentially expressed in the glomerular layer, within glomeruli. Expressed in cerebellum in the molecular and granule cell layers. Strongly expressed in amygdala complex, particularly in the lateral and basolateral nuclei. Isoform 1 is more abundant in brain compared to isoform 2 (at protein level). Expressed in the nodose ganglion and dorsal root ganglion. Expressed in dendritic spine cells.

The protein localises to the cell membrane. It localises to the postsynaptic cell membrane. It is found in the cell projection. The protein resides in the dendrite. The enzyme catalyses Na(+)(in) = Na(+)(out). It carries out the reaction Ca(2+)(in) = Ca(2+)(out). The catalysed reaction is K(+)(in) = K(+)(out). It catalyses the reaction Li(+)(in) = Li(+)(out). With respect to regulation, inhibited by the diuretic drug amiloride. Its activity is regulated as follows. The activity of the channel is sensitive to rapid decrease in osmotic pressure. In terms of biological role, forms voltage-independent, pH-gated trimeric sodium channels that act as postsynaptic excitatory receptors in the nervous system, playing a crucial role in regulating synaptic plasticity, learning, and memory. Upon extracellular pH drop this channel elicits transient, fast activating, and completely desensitizing inward currents. Displays high selectivity for sodium ions but can also permit the permeation of other cations. Regulates more or less directly intracellular calcium concentration and CaMKII phosphorylation, and thereby the density of dendritic spines. Modulates neuronal activity in the circuits underlying innate fear. Has high selectivity for sodium ions but is also potentially permeable to other cations including potassium. Could function in cochlear mechanoelectrical transduction. This chain is Acid-sensing ion channel 1, found in Mus musculus (Mouse).